A 150-amino-acid polypeptide reads, in one-letter code: D-aminoacyl-tRNA deacylase (150 aa).

Positions 138 to 139 match the Gly-cisPro motif, important for rejection of L-amino acids motif; the sequence is GP.

The protein belongs to the DTD family. As to quaternary structure, homodimer.

Its subcellular location is the cytoplasm. It carries out the reaction glycyl-tRNA(Ala) + H2O = tRNA(Ala) + glycine + H(+). The catalysed reaction is a D-aminoacyl-tRNA + H2O = a tRNA + a D-alpha-amino acid + H(+). Its function is as follows. An aminoacyl-tRNA editing enzyme that deacylates mischarged D-aminoacyl-tRNAs. Also deacylates mischarged glycyl-tRNA(Ala), protecting cells against glycine mischarging by AlaRS. Acts via tRNA-based rather than protein-based catalysis; rejects L-amino acids rather than detecting D-amino acids in the active site. By recycling D-aminoacyl-tRNA to D-amino acids and free tRNA molecules, this enzyme counteracts the toxicity associated with the formation of D-aminoacyl-tRNA entities in vivo and helps enforce protein L-homochirality. The chain is D-aminoacyl-tRNA deacylase from Cytophaga hutchinsonii (strain ATCC 33406 / DSM 1761 / CIP 103989 / NBRC 15051 / NCIMB 9469 / D465).